The primary structure comprises 497 residues: Delayed-rectifier potassium channel regulatory subunit KCNS1 (497 aa).

At methionine 1–leucine 186 the chain is on the cytoplasmic side. The chain crosses the membrane as a helical span at residues proline 187–isoleucine 208. At histidine 209–proline 239 the chain is on the extracellular side. A helical transmembrane segment spans residues valine 240 to leucine 262. At alanine 263–proline 273 the chain is on the cytoplasmic side. A helical membrane pass occupies residues leucine 274–alanine 291. At glycine 292 to leucine 309 the chain is on the extracellular side. The helical; Voltage-sensor transmembrane segment at glycine 310–histidine 330 threads the bilayer. Over serine 331–tyrosine 345 the chain is Cytoplasmic. The chain crosses the membrane as a helical span at residues arginine 346–tyrosine 367. Residues threonine 368–isoleucine 379 lie on the Extracellular side of the membrane. The segment at residues proline 380–threonine 391 is an intramembrane region (helical). Residues threonine 392–aspartate 397 carry the Selectivity filter motif. The stretch at threonine 392–valine 399 is an intramembrane region. Over proline 400–lysine 406 the chain is Extracellular. Residues leucine 407–tyrosine 435 traverse the membrane as a helical segment. Residues arginine 436–tyrosine 497 are Cytoplasmic-facing. The disordered stretch occupies residues serine 464 to tyrosine 497. The segment covering threonine 470–aspartate 482 has biased composition (basic and acidic residues).

Belongs to the potassium channel family. S (TC 1.A.1.2) subfamily. Kv9.1/KCNS1 sub-subfamily. As to quaternary structure, heterotetramer with KCNB1. Heterotetramer with KCNB2. Does not form homomultimers. As to expression, highly expressed in brain, but not in the other tissues tested.

The protein resides in the cell membrane. Its function is as follows. Potassium channel regulatory subunit that modulate the delayed rectifier voltage-gated potassium channel activity of KCNB1 and KCNB2 by altering their kinetics, expression levels, and shifting the half-inactivation potential to more polarized values. While it does not form functional channels on its own, it can form functional heterotetrameric channels with KCNB1 and KCNB2. Each regulatory subunit has unique regulatory properties that can lead to extensive inhibition, significant changes in kinetics, and/or substantial shifts in the voltage dependencies of the inactivation process. The polypeptide is Delayed-rectifier potassium channel regulatory subunit KCNS1 (Rattus norvegicus (Rat)).